Reading from the N-terminus, the 506-residue chain is tRNA-2-methylthio-N(6)-dimethylallyladenosine synthase (506 aa).

Residues K14–V132 form the MTTase N-terminal domain. The [4Fe-4S] cluster site is built by C23, C61, C95, C169, C173, and C176. One can recognise a Radical SAM core domain in the interval R155–E386. Residues K388 to P456 form the TRAM domain.

It belongs to the methylthiotransferase family. MiaB subfamily. As to quaternary structure, monomer. [4Fe-4S] cluster serves as cofactor.

It is found in the cytoplasm. The catalysed reaction is N(6)-dimethylallyladenosine(37) in tRNA + (sulfur carrier)-SH + AH2 + 2 S-adenosyl-L-methionine = 2-methylsulfanyl-N(6)-dimethylallyladenosine(37) in tRNA + (sulfur carrier)-H + 5'-deoxyadenosine + L-methionine + A + S-adenosyl-L-homocysteine + 2 H(+). In terms of biological role, catalyzes the methylthiolation of N6-(dimethylallyl)adenosine (i(6)A), leading to the formation of 2-methylthio-N6-(dimethylallyl)adenosine (ms(2)i(6)A) at position 37 in tRNAs that read codons beginning with uridine. In Streptomyces griseus subsp. griseus (strain JCM 4626 / CBS 651.72 / NBRC 13350 / KCC S-0626 / ISP 5235), this protein is tRNA-2-methylthio-N(6)-dimethylallyladenosine synthase.